Consider the following 189-residue polypeptide: Cell division protein SepF (189 aa).

The segment at 25 to 70 (ESRVQQQAVKPSNSRPAQQEPVRDIKQPRLVSSSSQHVTNTPSSNE) is disordered. Composition is skewed to polar residues over residues 27–41 (RVQQ…SRPA) and 54–70 (LVSS…SSNE).

It belongs to the SepF family. As to quaternary structure, homodimer. Interacts with FtsZ.

Its subcellular location is the cytoplasm. In terms of biological role, cell division protein that is part of the divisome complex and is recruited early to the Z-ring. Probably stimulates Z-ring formation, perhaps through the cross-linking of FtsZ protofilaments. Its function overlaps with FtsA. This is Cell division protein SepF from Streptococcus gordonii (strain Challis / ATCC 35105 / BCRC 15272 / CH1 / DL1 / V288).